The following is a 454-amino-acid chain: Allantoinase (454 aa).

His58, His60, Lys149, His189, His245, and Asp318 together coordinate Zn(2+). N6-carboxylysine is present on Lys149.

The protein belongs to the metallo-dependent hydrolases superfamily. Allantoinase family. In terms of assembly, homotetramer. Zn(2+) is required as a cofactor. Post-translationally, carboxylation allows a single lysine to coordinate two zinc ions.

It catalyses the reaction (S)-allantoin + H2O = allantoate + H(+). It functions in the pathway nitrogen metabolism; (S)-allantoin degradation; allantoate from (S)-allantoin: step 1/1. Functionally, catalyzes the conversion of allantoin (5-ureidohydantoin) to allantoic acid by hydrolytic cleavage of the five-member hydantoin ring. This chain is Allantoinase, found in Enterococcus faecalis (strain ATCC 700802 / V583).